The sequence spans 328 residues: MSNTVVCALYRFVSLENYQEIQAPLLKMMQANNIKGTLLLAQEGINGTVAGSREDINTLIAWLKSDPRLNKLTTKESFTEENPFYRTKVKLKKEIVTMGVEGIDPKRTAGSYVKPKDWNALISDPDVLLVDTRNDYEISIGTFKNAVDPKTTNFREFPQYVKDNLDPAVNKKVAMFCTGGIRCEKSTAYLKEQGFDEVYHLEGGVLKYLEEVPQEESMWQGECFVFDNRVSVNHKLEKGQYDQCHGCRLPITEDDKKSDKYQEGVCCHQCHEQLTVEQKQRFAQREKQVGLAKQRGQTHIGNDAVAQLENNRLKKQAVKQAQRVEAKK.

The 95-residue stretch at 123–217 folds into the Rhodanese domain; that stretch reads SDPDVLLVDT…YLEEVPQEES (95 aa). Cys-177 serves as the catalytic Cysteine persulfide intermediate.

This sequence belongs to the TrhO family.

It carries out the reaction uridine(34) in tRNA + AH2 + O2 = 5-hydroxyuridine(34) in tRNA + A + H2O. Catalyzes oxygen-dependent 5-hydroxyuridine (ho5U) modification at position 34 in tRNAs. The chain is tRNA uridine(34) hydroxylase from Psychromonas ingrahamii (strain DSM 17664 / CCUG 51855 / 37).